Reading from the N-terminus, the 252-residue chain is Triosephosphate isomerase (252 aa).

10–12 lines the substrate pocket; it reads NWK. The active-site Electrophile is the H96. E168 (proton acceptor) is an active-site residue. Residues G174, S214, and 235-236 contribute to the substrate site; that span reads GG.

It belongs to the triosephosphate isomerase family. In terms of assembly, homodimer.

It localises to the cytoplasm. The catalysed reaction is D-glyceraldehyde 3-phosphate = dihydroxyacetone phosphate. Its pathway is carbohydrate biosynthesis; gluconeogenesis. The protein operates within carbohydrate degradation; glycolysis; D-glyceraldehyde 3-phosphate from glycerone phosphate: step 1/1. Its function is as follows. Involved in the gluconeogenesis. Catalyzes stereospecifically the conversion of dihydroxyacetone phosphate (DHAP) to D-glyceraldehyde-3-phosphate (G3P). This chain is Triosephosphate isomerase, found in Streptococcus equi subsp. zooepidemicus (strain MGCS10565).